A 358-amino-acid chain; its full sequence is Peptide chain release factor 1 (358 aa).

Gln233 carries the N5-methylglutamine modification.

Belongs to the prokaryotic/mitochondrial release factor family. Methylated by PrmC. Methylation increases the termination efficiency of RF1.

It localises to the cytoplasm. Functionally, peptide chain release factor 1 directs the termination of translation in response to the peptide chain termination codons UAG and UAA. This Staphylococcus saprophyticus subsp. saprophyticus (strain ATCC 15305 / DSM 20229 / NCIMB 8711 / NCTC 7292 / S-41) protein is Peptide chain release factor 1.